Here is a 391-residue protein sequence, read N- to C-terminus: 1-acyl-sn-glycerol-3-phosphate acyltransferase 2 (391 aa).

Residues 3–23 form a helical membrane-spanning segment; the sequence is MAAAAVIVPLGILFFISGLVV. The short motif at 92–97 is the HXXXXD motif element; the sequence is HRSDID. Transmembrane regions (helical) follow at residues 306–326 and 334–354; these read LAVV…FLHW and KGIA…QILI. Residues 358-391 form a disordered region; the sequence is QSERSTPAKVAPAKPKDKHQSGSSSQTEVEEKQK.

This sequence belongs to the 1-acyl-sn-glycerol-3-phosphate acyltransferase family.

Its subcellular location is the endoplasmic reticulum membrane. The enzyme catalyses a 1-acyl-sn-glycero-3-phosphate + an acyl-CoA = a 1,2-diacyl-sn-glycero-3-phosphate + CoA. It participates in phospholipid metabolism; CDP-diacylglycerol biosynthesis; CDP-diacylglycerol from sn-glycerol 3-phosphate: step 2/3. Converts lysophosphatidic acid (LPA) into phosphatidic acid by incorporating acyl moiety at the 2 position. The protein is 1-acyl-sn-glycerol-3-phosphate acyltransferase 2 (LPAT2) of Brassica oleracea (Wild cabbage).